Consider the following 300-residue polypeptide: Ribosomal protein L11 methyltransferase (300 aa).

S-adenosyl-L-methionine-binding residues include Thr-152, Gly-173, Asp-195, and Asn-234.

The protein belongs to the methyltransferase superfamily. PrmA family.

The protein localises to the cytoplasm. The enzyme catalyses L-lysyl-[protein] + 3 S-adenosyl-L-methionine = N(6),N(6),N(6)-trimethyl-L-lysyl-[protein] + 3 S-adenosyl-L-homocysteine + 3 H(+). Its function is as follows. Methylates ribosomal protein L11. The chain is Ribosomal protein L11 methyltransferase from Burkholderia thailandensis (strain ATCC 700388 / DSM 13276 / CCUG 48851 / CIP 106301 / E264).